The following is a 178-amino-acid chain: Transcription factor E (178 aa).

In terms of domain architecture, HTH TFE/IIEalpha-type spans 4–88 (AEDLFINLAK…YWKPNIDQIN (85 aa)).

Belongs to the TFE family. In terms of assembly, monomer. Interaction with RNA polymerase subunits RpoF and RpoE is necessary for Tfe stimulatory transcription activity. Able to interact with Tbp and RNA polymerase in the absence of DNA promoter. Interacts both with the preinitiation and elongation complexes.

Transcription factor that plays a role in the activation of archaeal genes transcribed by RNA polymerase. Facilitates transcription initiation by enhancing TATA-box recognition by TATA-box-binding protein (Tbp), and transcription factor B (Tfb) and RNA polymerase recruitment. Not absolutely required for transcription in vitro, but particularly important in cases where Tbp or Tfb function is not optimal. It dynamically alters the nucleic acid-binding properties of RNA polymerases by stabilizing the initiation complex and destabilizing elongation complexes. Seems to translocate with the RNA polymerase following initiation and acts by binding to the non template strand of the transcription bubble in elongation complexes. The sequence is that of Transcription factor E from Saccharolobus islandicus (strain L.S.2.15 / Lassen #1) (Sulfolobus islandicus).